Consider the following 379-residue polypeptide: MAKRDYYEVLGVGKNASDDEIKKAYRKLAMKYHPDRNPDSKESEEKFKEVKEAYEMLSDAEKKAAYDQYGHAGVDPNMAGGFGGGQGYGGFAEAFGDIFGDIFGQQAGGGRRGGGGPQAYRGADLRYSMEISLEQAAHGHEAQIRVPHWDDCDHCHGNGAEPGSSVETCPTCHGAGQVRVSQGFFSMQQTCPKCHGSGKFIPKPCTKCHGQGKLKSQKTLEVKIPAGIDEGMRIRSSGNGEPGINGGPPGDLYVEVHIKAHPVFERDGDDLHCQMPISFATAALGGDLEVPTLNGKATFPVPEATQSGKTFRLRGKGIKGVRSGYPGDLYVHVNVETPVKLTEAQKDMLRQFDRSVHEGGSRHSPQEQSWLDKVKSFFS.

One can recognise a J domain in the interval 5 to 70 (DYYEVLGVGK…EKKAAYDQYG (66 aa)). The segment at 139 to 217 (GHEAQIRVPH…CHGQGKLKSQ (79 aa)) adopts a CR-type zinc-finger fold. Residues cysteine 152, cysteine 155, cysteine 169, cysteine 172, cysteine 191, cysteine 194, cysteine 205, and cysteine 208 each coordinate Zn(2+). 4 CXXCXGXG motif repeats span residues 152 to 159 (CDHCHGNG), 169 to 176 (CPTCHGAG), 191 to 198 (CPKCHGSG), and 205 to 212 (CTKCHGQG). The segment at 356-379 (VHEGGSRHSPQEQSWLDKVKSFFS) is disordered.

The protein belongs to the DnaJ family. Homodimer. The cofactor is Zn(2+).

The protein localises to the cytoplasm. Functionally, participates actively in the response to hyperosmotic and heat shock by preventing the aggregation of stress-denatured proteins and by disaggregating proteins, also in an autonomous, DnaK-independent fashion. Unfolded proteins bind initially to DnaJ; upon interaction with the DnaJ-bound protein, DnaK hydrolyzes its bound ATP, resulting in the formation of a stable complex. GrpE releases ADP from DnaK; ATP binding to DnaK triggers the release of the substrate protein, thus completing the reaction cycle. Several rounds of ATP-dependent interactions between DnaJ, DnaK and GrpE are required for fully efficient folding. Also involved, together with DnaK and GrpE, in the DNA replication of plasmids through activation of initiation proteins. The sequence is that of Chaperone protein DnaJ from Cupriavidus pinatubonensis (strain JMP 134 / LMG 1197) (Cupriavidus necator (strain JMP 134)).